The primary structure comprises 441 residues: Ribulose bisphosphate carboxylase large chain (441 aa).

At Lys-5 the chain carries N6,N6,N6-trimethyllysine. The substrate site is built by Asn-114 and Thr-164. The Proton acceptor role is filled by Lys-166. Lys-168 contacts substrate. Mg(2+)-binding residues include Lys-192, Asp-194, and Glu-195. Lys-192 is modified (N6-carboxylysine). The active-site Proton acceptor is the His-285. Substrate contacts are provided by Arg-286, His-318, and Ser-370.

It belongs to the RuBisCO large chain family. Type I subfamily. In terms of assembly, heterohexadecamer of 8 large chains and 8 small chains; disulfide-linked. The disulfide link is formed within the large subunit homodimers. Requires Mg(2+) as cofactor. The disulfide bond which can form in the large chain dimeric partners within the hexadecamer appears to be associated with oxidative stress and protein turnover.

The protein resides in the plastid. It localises to the chloroplast. The enzyme catalyses 2 (2R)-3-phosphoglycerate + 2 H(+) = D-ribulose 1,5-bisphosphate + CO2 + H2O. The catalysed reaction is D-ribulose 1,5-bisphosphate + O2 = 2-phosphoglycolate + (2R)-3-phosphoglycerate + 2 H(+). Functionally, ruBisCO catalyzes two reactions: the carboxylation of D-ribulose 1,5-bisphosphate, the primary event in carbon dioxide fixation, as well as the oxidative fragmentation of the pentose substrate in the photorespiration process. Both reactions occur simultaneously and in competition at the same active site. The sequence is that of Ribulose bisphosphate carboxylase large chain from Drosera dichrosepala (Rusty sundew).